A 305-amino-acid polypeptide reads, in one-letter code: Nuclear egress protein 1 (305 aa).

A disordered region spans residues 1–42 (MYDIAPRRSGSRPGPGRDKTRRRSRFSAAGNPGVERRASRKS). A CCCH-type zinc finger spans residues 105–224 (CLTLSGMGYY…YVIFPGTSAH (120 aa)).

Belongs to the herpesviridae NEC1 protein family. In terms of assembly, forms a heterohexameric complex with NEC2. Interacts with capsid vertex specific component 2/CVC2; this interaction directs the capsid to the host inner nuclear membrane to initiate budding. Post-translationally, phosphorylated at serine residues in the N-terminus. This phosphorylation regulates the localization within the inner nuclear membrane.

It is found in the host nucleus inner membrane. Functionally, plays an essential role in virion nuclear egress, the first step of virion release from infected cell. Within the host nucleus, NEC1 interacts with the newly formed capsid through the vertexes and directs it to the inner nuclear membrane by associating with NEC2. Induces the budding of the capsid at the inner nuclear membrane as well as its envelopment into the perinuclear space. There, the NEC1/NEC2 complex promotes the fusion of the enveloped capsid with the outer nuclear membrane and the subsequent release of the viral capsid into the cytoplasm where it will reach the secondary budding sites in the host Golgi or trans-Golgi network. The chain is Nuclear egress protein 1 from Human herpesvirus 2 (strain HG52) (HHV-2).